Reading from the N-terminus, the 729-residue chain is DNA topoisomerase 3 (729 aa).

In terms of domain architecture, Toprim spans Lys-3 to Thr-136. Residues Glu-9 and Asp-105 each contribute to the Mg(2+) site. The 442-residue stretch at Tyr-153–Val-594 folds into the Topo IA-type catalytic domain. Residues Asn-187–Gln-192 are interaction with DNA. Tyr-310 acts as the O-(5'-phospho-DNA)-tyrosine intermediate in catalysis. Residues Glu-686–Glu-713 are compositionally biased toward basic and acidic residues. The interval Glu-686 to Pro-718 is disordered.

The protein belongs to the type IA topoisomerase family. Mg(2+) serves as cofactor.

The enzyme catalyses ATP-independent breakage of single-stranded DNA, followed by passage and rejoining.. Its function is as follows. Releases the supercoiling and torsional tension of DNA, which is introduced during the DNA replication and transcription, by transiently cleaving and rejoining one strand of the DNA duplex. Introduces a single-strand break via transesterification at a target site in duplex DNA. The scissile phosphodiester is attacked by the catalytic tyrosine of the enzyme, resulting in the formation of a DNA-(5'-phosphotyrosyl)-enzyme intermediate and the expulsion of a 3'-OH DNA strand. The free DNA strand then undergoes passage around the unbroken strand, thus removing DNA supercoils. Finally, in the religation step, the DNA 3'-OH attacks the covalent intermediate to expel the active-site tyrosine and restore the DNA phosphodiester backbone. In Bacillus cereus (strain ATCC 10987 / NRS 248), this protein is DNA topoisomerase 3.